The chain runs to 277 residues: UBX domain-containing protein 10 (277 aa).

The disordered stretch occupies residues 1 to 102 (MAIEAPVNFA…APDEMPELLL (102 aa)). Residues 16-31 (TVVSTAGDSSTWQPSS) show a composition bias toward polar residues. Positions 35–50 (HVIRPKSAKGRKRPNL) are enriched in basic residues. Over residues 60–77 (SPSALSSSPPPRSSGSPS) the composition is skewed to low complexity. S88 is subject to Phosphoserine. Residues 191-268 (DEEPRLLLAV…GILHKSVLGI (78 aa)) enclose the UBX domain.

This sequence belongs to the UBXN10 family. As to quaternary structure, interacts with CLUAP1; the interaction is direct and mediates interaction with the intraflagellar transport complex B (IFT-B). Interacts with VCP; the interaction is direct.

Its subcellular location is the cell projection. The protein localises to the cilium. VCP/p97-binding protein required for ciliogenesis. Acts as a tethering factor that facilitates recruitment of VCP/p97 to the intraflagellar transport complex B (IFT-B) in cilia. UBX domain-containing proteins act as tethering factors for VCP/p97 and may specify substrate specificity of VCP/p97. This is UBX domain-containing protein 10 from Mus musculus (Mouse).